Here is a 60-residue protein sequence, read N- to C-terminus: Large ribosomal subunit protein bL32 (60 aa).

A compositionally biased stretch (basic residues) spans 1–23 (MAKHPVPKKKTSKSKRDMRRSHH). The tract at residues 1 to 34 (MAKHPVPKKKTSKSKRDMRRSHHALTAPNLTECP) is disordered. Zn(2+)-binding residues include cysteine 33, cysteine 36, cysteine 46, and cysteine 49. The segment at 33-49 (CPQCHGKKLSHHICPNC) adopts a C4-type zinc-finger fold.

Belongs to the bacterial ribosomal protein bL32 family. Part of the 50S ribosomal subunit. Contacts proteins L17 and L22. It depends on Zn(2+) as a cofactor.

In terms of biological role, forms a cluster with L17 and L22, and with L22, a pair of 'tweezers' that hold together all the domains of the 23S rRNA. Interacts with the antibiotic troleandomycin which blocks the peptide exit tunnel. The protein is Large ribosomal subunit protein bL32 (rpmF) of Deinococcus radiodurans (strain ATCC 13939 / DSM 20539 / JCM 16871 / CCUG 27074 / LMG 4051 / NBRC 15346 / NCIMB 9279 / VKM B-1422 / R1).